The chain runs to 426 residues: PHD finger-containing protein 6 (426 aa).

The PHD-type zinc finger occupies 9–59 (RSICETCGHQGWKNSLVTCSKCRIACEHCYCMRESSFETSIHFVCADCSMR). Zn(2+) contacts are provided by Cys12, Cys15, Cys27, Cys30, His36, Cys39, Cys53, and Cys56. Disordered stretches follow at residues 122 to 144 (TFRVPRPVSARPPMGLTKPTAGF) and 185 to 205 (RQASKAQAVGEGSKSKVGDGA).

Interacts directly with AIPP3/BDT1.

Its function is as follows. Together with AIPP3/BDT1, cooperates to form a BAH-PHD bivalent histone reader complex able to read histone H3 lysine 27 trimethylation (H3K27me3) histone marks in order to regulate transcription, especially to prevent early flowering; promotes AIPP3/BDT1 binding to H3K27me3. The protein is PHD finger-containing protein 6 of Arabidopsis thaliana (Mouse-ear cress).